The sequence spans 207 residues: MTARGNLFIVSAPSGAGKSSLISALLKDKPADMQVSVSHTTRAPRPGEVNGQHYHFVNVEEFKALIEQNAFFEWAEVFGNYYGTSRHVIEHTLTQGIDVFLDIDWQGAQQVKAVMPEAIGVFILPPSRDELERRLTGRGQDSQEVIASRMAQAVSEMSHYKEYDFIIVNDDFDTALADLRAIIRSQRLTGASQIHAQNDMLNDLLAG.

A Guanylate kinase-like domain is found at 5–184 (GNLFIVSAPS…ALADLRAIIR (180 aa)). 12-19 (APSGAGKS) serves as a coordination point for ATP.

This sequence belongs to the guanylate kinase family.

It localises to the cytoplasm. It carries out the reaction GMP + ATP = GDP + ADP. Functionally, essential for recycling GMP and indirectly, cGMP. In Shewanella sp. (strain MR-7), this protein is Guanylate kinase.